The chain runs to 171 residues: Lipoprotein signal peptidase (171 aa).

Helical transmembrane passes span 7–27 (GLIALLATLALDQASKLWLYF), 64–84 (LGRWLLVAVSLAAVIGLSVWM), and 88–108 (GSRLLAVALGLIVGGALGNAI). Residues aspartate 118 and aspartate 136 contribute to the active site. Residues 128 to 148 (SWYVFNVADAAIVAGVVGLIL) traverse the membrane as a helical segment.

Belongs to the peptidase A8 family.

The protein localises to the cell inner membrane. It catalyses the reaction Release of signal peptides from bacterial membrane prolipoproteins. Hydrolyzes -Xaa-Yaa-Zaa-|-(S,diacylglyceryl)Cys-, in which Xaa is hydrophobic (preferably Leu), and Yaa (Ala or Ser) and Zaa (Gly or Ala) have small, neutral side chains.. It functions in the pathway protein modification; lipoprotein biosynthesis (signal peptide cleavage). Its function is as follows. This protein specifically catalyzes the removal of signal peptides from prolipoproteins. The sequence is that of Lipoprotein signal peptidase from Methylorubrum extorquens (strain PA1) (Methylobacterium extorquens).